A 1375-amino-acid polypeptide reads, in one-letter code: MAQANSRSRNSATISYPEKRRARVNLGKREVEILKTPYLLETQIESYRKFLQKDIAAEKREDNGLHAAFKSVFPITSYSGYAVLEYVGYSLGGESTLFDVEECKLRGLTYAAPLKVNMRLVIYDKEAPAGKKAIKDIKEQEVYMGEIPLMTETGSLVINGTERVVVSQLHRSPGVFFEHDKGKTHSSGKLLYSARVIPYRGSWLDFEFDPKDCLFVRIDRRRKLPATVILRALGYDTEQILDMFYKTNHFHLNQETVTLDLIPQRLRGELAVVEIKDKKGKVIVEANRRISARHIRLIEKAEINKLELPDDYLYGKVIGKTIIDKETGEIIAHANEEITAELLKNLRATKTASLDTLYINEIECGPYVSDTLRLDTTTNQLEALVEIYRIMRPGEPPTKEAAESLFENLFFSPERYSLSAVGRMKFNRRVGRKELTGLDVLSKEDIVDVLRVLVDIRDGKGDVDDIDHLGNRRIRSVGEMAENQFRVGLVRVERAVKDRLSLADVENLMPQDLVNAKPVSAAIKEFFGSSQLSQFMDQNNPLSEITHKRRVSALGPGGLTRERAGFEVRDVHVTHYGRVCPIETPEGPNIGLINSLAVFARANEYGFLETPYRKVVDRVVTDETEYLSAIEEGDYYIAQANTNVDGKGRLVDDLISCRYKGEFTLTTPDKINYMDVSPRQIVSVAAALIPFLEHDDANRALMGSNMQRQAVPTIRPETPLVGTGMERTVAVDSGVTVIAKRSGVIDSVDASRIVVRVDRKETEDDDDIGVDIYNLTKFTRSNQNTCINQHPIVEVGDKVQKGDVLADGPSTDIGELALGQNLLVAFMPWNGYNFEDSILISERLVEEDRFTTIHIQEFTCVARDTKLGPEEITSDIPNVGESALAKLDESGIVHIGAEVNAGDILVGKVTPKGETQLTPEEKLLRAIFGEKASDVKDTSLRVTPGITGTVIDVRIFTREGIKKDERTLEIEKAELSKVEKDLNDELRVREDALFENLEKLLTGRVAAGGPNKLAKGTKITKSYLADLPRQKWFEIRLQDDAATKRLEASHEHFKELRETRDAKLKDSRQKLTQGGDLAPGVIKIVKVYLAVKRRIQPGDKMAGRHGNKGVISTIVPIEDMPYLEDGTPVDIVLNPLGVPSRMNIGQVLETHLGWAAKGLGKKIGEMIEKGADAKELRNSLKPIYDLSKTQRFDLEALEDPEIVTLAKNLRKGVPISSPVFDGATEEEIKQLLKMADLPTSGQAALYDGRTGKKFDRSVTVGYMYMLKLNHLVDDKMHARSTGSYSLVTQQPLGGKAQFGGQRFGEMEVWALEAYGAAYTLQEMLTVKSDDVAGRTRMYKNIVDGDHRMDAGMPESFNVLVKEIRSLAIDIGLEND.

This sequence belongs to the RNA polymerase beta chain family. The RNAP catalytic core consists of 2 alpha, 1 beta, 1 beta' and 1 omega subunit. When a sigma factor is associated with the core the holoenzyme is formed, which can initiate transcription.

The enzyme catalyses RNA(n) + a ribonucleoside 5'-triphosphate = RNA(n+1) + diphosphate. Its function is as follows. DNA-dependent RNA polymerase catalyzes the transcription of DNA into RNA using the four ribonucleoside triphosphates as substrates. This is DNA-directed RNA polymerase subunit beta from Coxiella burnetii (strain RSA 331 / Henzerling II).